The sequence spans 369 residues: CCA-adding enzyme (369 aa).

Positions 8 and 11 each coordinate ATP. G8 and R11 together coordinate CTP. Positions 21 and 23 each coordinate Mg(2+). Positions 91, 137, and 140 each coordinate ATP. CTP-binding residues include R91, R137, and R140.

It belongs to the tRNA nucleotidyltransferase/poly(A) polymerase family. Bacterial CCA-adding enzyme type 2 subfamily. Mg(2+) is required as a cofactor.

The catalysed reaction is a tRNA precursor + 2 CTP + ATP = a tRNA with a 3' CCA end + 3 diphosphate. The enzyme catalyses a tRNA with a 3' CCA end + 2 CTP + ATP = a tRNA with a 3' CCACCA end + 3 diphosphate. Functionally, catalyzes the addition and repair of the essential 3'-terminal CCA sequence in tRNAs without using a nucleic acid template. Adds these three nucleotides in the order of C, C, and A to the tRNA nucleotide-73, using CTP and ATP as substrates and producing inorganic pyrophosphate. tRNA 3'-terminal CCA addition is required both for tRNA processing and repair. Also involved in tRNA surveillance by mediating tandem CCA addition to generate a CCACCA at the 3' terminus of unstable tRNAs. While stable tRNAs receive only 3'-terminal CCA, unstable tRNAs are marked with CCACCA and rapidly degraded. This is CCA-adding enzyme from Francisella tularensis subsp. novicida (strain U112).